The chain runs to 439 residues: Hemagglutinin-esterase (439 aa).

An N-terminal signal peptide occupies residues 1–22 (MGRMCIAMAPRTLLLLIGCQLV). The segment at 12 to 132 (TLLLLIGCQL…DNNKWMGNKA (121 aa)) is esterase domain 1. Topologically, residues 23–407 (FGFNEPINIV…PVCLYDPLPV (385 aa)) are virion surface. Catalysis depends on Ser-45, which acts as the Nucleophile. Residues Cys-49 and Cys-70 are joined by a disulfide bond. N-linked (GlcNAc...) asparagine; by host glycosylation is present at Asn-94. Cysteines 118 and 167 form a disulfide. The receptor binding stretch occupies residues 133-281 (RFYALLYKKM…GNYKAVSLEY (149 aa)). Asn-196, Asn-246, Asn-309, and Asn-316 each carry an N-linked (GlcNAc...) asparagine; by host glycan. 2 disulfide bridges follow: Cys-202/Cys-291 and Cys-210/Cys-264. Positions 282 to 395 (LLTIPSKAIC…HCPTAANIGY (114 aa)) are esterase domain 2. Cys-322 and Cys-327 are disulfide-bonded. N-linked (GlcNAc...) asparagine; by host glycosylation occurs at Asn-331. Active-site charge relay system residues include Asp-342 and His-345. Residues Asn-360 and Asn-374 are each glycosylated (N-linked (GlcNAc...) asparagine; by host). A disulfide bond links Cys-363 and Cys-387. The helical transmembrane segment at 408–428 (ILLGVLLGIAVLIIVFLILYF) threads the bilayer. At 429 to 439 (MADSSVRLHEA) the chain is on the intravirion side.

Belongs to the influenza type C/coronaviruses hemagglutinin-esterase family. In terms of assembly, homodimer; disulfide-linked. Forms a complex with the M protein in the pre-Golgi. Associates then with S-M complex to form a ternary complex S-M-HE. Post-translationally, N-glycosylated in the host RER.

Its subcellular location is the virion membrane. It is found in the host cell membrane. It catalyses the reaction N-acetyl-9-O-acetylneuraminate + H2O = N-acetylneuraminate + acetate + H(+). It carries out the reaction N-acetyl-4-O-acetylneuraminate + H2O = N-acetylneuraminate + acetate + H(+). Structural protein that makes short spikes at the surface of the virus. Contains receptor binding and receptor-destroying activities. Mediates de-O-acetylation of N-acetyl-4-O-acetylneuraminic acid, which is probably the receptor determinant recognized by the virus on the surface of erythrocytes and susceptible cells. This receptor-destroying activity is important for virus release as it probably helps preventing self-aggregation and ensures the efficient spread of the progeny virus from cell to cell. May serve as a secondary viral attachment protein for initiating infection, the spike protein being the major one. May become a target for both the humoral and the cellular branches of the immune system. This Rat coronavirus (strain 681) (RCV-SDAV) protein is Hemagglutinin-esterase.